The following is a 467-amino-acid chain: Ribulose bisphosphate carboxylase large chain (467 aa).

Lys5 carries the post-translational modification N6,N6,N6-trimethyllysine. Residues Asn114 and Thr164 each coordinate substrate. The Proton acceptor role is filled by Lys166. Lys168 lines the substrate pocket. Positions 192, 194, and 195 each coordinate Mg(2+). N6-carboxylysine is present on Lys192. The active-site Proton acceptor is the His285. Substrate is bound by residues Arg286, His318, and Ser370.

Belongs to the RuBisCO large chain family. Type I subfamily. In terms of assembly, heterohexadecamer of 8 large chains and 8 small chains; disulfide-linked. The disulfide link is formed within the large subunit homodimers. The cofactor is Mg(2+). The disulfide bond which can form in the large chain dimeric partners within the hexadecamer appears to be associated with oxidative stress and protein turnover.

It localises to the plastid. The protein resides in the chloroplast. It carries out the reaction 2 (2R)-3-phosphoglycerate + 2 H(+) = D-ribulose 1,5-bisphosphate + CO2 + H2O. The enzyme catalyses D-ribulose 1,5-bisphosphate + O2 = 2-phosphoglycolate + (2R)-3-phosphoglycerate + 2 H(+). Functionally, ruBisCO catalyzes two reactions: the carboxylation of D-ribulose 1,5-bisphosphate, the primary event in carbon dioxide fixation, as well as the oxidative fragmentation of the pentose substrate in the photorespiration process. Both reactions occur simultaneously and in competition at the same active site. The chain is Ribulose bisphosphate carboxylase large chain from Hydrophyllum virginianum (Eastern waterleaf).